A 281-amino-acid chain; its full sequence is 4-diphosphocytidyl-2-C-methyl-D-erythritol kinase (281 aa).

Residue K11 is part of the active site. ATP is bound at residue 95-105 (PVAAGLGGGSS). D137 is an active-site residue.

It belongs to the GHMP kinase family. IspE subfamily.

It carries out the reaction 4-CDP-2-C-methyl-D-erythritol + ATP = 4-CDP-2-C-methyl-D-erythritol 2-phosphate + ADP + H(+). It functions in the pathway isoprenoid biosynthesis; isopentenyl diphosphate biosynthesis via DXP pathway; isopentenyl diphosphate from 1-deoxy-D-xylulose 5-phosphate: step 3/6. In terms of biological role, catalyzes the phosphorylation of the position 2 hydroxy group of 4-diphosphocytidyl-2C-methyl-D-erythritol. In Geobacter metallireducens (strain ATCC 53774 / DSM 7210 / GS-15), this protein is 4-diphosphocytidyl-2-C-methyl-D-erythritol kinase.